Reading from the N-terminus, the 391-residue chain is Rhizopuspepsin-3 (391 aa).

The first 21 residues, 1–21, serve as a signal peptide directing secretion; sequence MKFTLISSCVTLALMTLSIEA. A propeptide spans 22 to 68 (activation peptide); it reads APSGKKVNIPLTKNKDYKPNAKNAIQKAIAKYHRHRSVSSSNSTSTD. The 305-residue stretch at 84–388 folds into the Peptidase A1 domain; sequence YYGEVTVGTP…NPEVPHVQIA (305 aa). Residue Asp-102 is part of the active site. An intrachain disulfide couples Cys-115 to Cys-118. The active site involves Asp-285. The cysteines at positions 319 and 352 are disulfide-linked.

Belongs to the peptidase A1 family.

The catalysed reaction is Hydrolysis of proteins with broad specificity similar to that of pepsin A, preferring hydrophobic residues at P1 and P1'. Clots milk and activates trypsinogen. Does not cleave 4-Gln-|-His-5, but does cleave 10-His-|-Leu-11 and 12-Val-|-Glu-13 in B chain of insulin.. In Rhizopus niveus, this protein is Rhizopuspepsin-3.